We begin with the raw amino-acid sequence, 1358 residues long: DNA-directed RNA polymerase subunit beta (1358 aa).

The protein belongs to the RNA polymerase beta chain family. The RNAP catalytic core consists of 2 alpha, 1 beta, 1 beta' and 1 omega subunit. When a sigma factor is associated with the core the holoenzyme is formed, which can initiate transcription.

The enzyme catalyses RNA(n) + a ribonucleoside 5'-triphosphate = RNA(n+1) + diphosphate. DNA-dependent RNA polymerase catalyzes the transcription of DNA into RNA using the four ribonucleoside triphosphates as substrates. This is DNA-directed RNA polymerase subunit beta from Francisella tularensis subsp. holarctica (strain LVS).